Reading from the N-terminus, the 278-residue chain is Probable esterase TOX9 (278 aa).

Residues Ser119, Asp222, and His250 each act as charge relay system in the active site.

It belongs to the LovG family.

The protein operates within mycotoxin biosynthesis. Probable esterase; part of the Tox1A locus, one of the 2 loci that mediate the biosynthesis of T-toxin, a family of linear polyketides 37 to 45 carbons in length, of which the major component is 41 carbons, and which leads to high virulence to maize. One of the PKSs (PKS1 or PKS2) could synthesize a precursor, used subsequently by the other PKS as starter unit, to add additional carbons. Variability in the length of the final carbon backbone C35-47 could be achieved by varying the number of condensation cycles, or use of different starter or extender units or might be due to decarboxylation of the penultimate product, catalyzed by DEC1. Additional proteins are required for the biosynthesis of T-toxin, including oxidoreductases RED1, RED2, RED3, LAM1 and OXI1, as well as esterase TOX9. The protein is Probable esterase TOX9 of Cochliobolus heterostrophus (strain C4 / ATCC 48331 / race T) (Southern corn leaf blight fungus).